Consider the following 550-residue polypeptide: MAAKDVKFGNDARIKMLEGVNVLADAVKVTLGPKGRNVVLDKSFGAPTITKDGVSVAREIELEDKFQNMGAQMVKEVASQANDAAGDGTTTATVLAQSIIAEGLKAVAAGMNPMDLKRGIDKAVIAAVAALKELSVPCEDTKAIAQVGTISANADATVGNLIAEAMEKVGRDGVITVEEGQALHDELDVVEGMQFDRGYLSPYFINNQEAGSIDLESPFILLVDKKVSNIRELLPALEGVAKASRPLLIIAEDVEGEALATLVVNNMRGIVKVAAVKAPGFGDRRKSMLQDIAVLTAGTVISEEIGLELEKVQLEDLGQAKRITITKENTTIIDGAGEETMIQGRVAQIRQQIEDATSDYDKEKLQERVAKLAGGVAVIKVGAATEVEMKEKKDRVQDALHATRAAVEEGVVAGGGVALIRAASKVAASGLEGDNEEQNVGIRVALRAMESPLRQIVKNAGDEDSVVANNVRAGEGNYGYNAATGVYGDMIAMGILDPTKVTRSALQFAASVAGLMITTEAMITDMPAKDASAMPDMGGMGGMGGMGGMM.

Residues 30–33 (TLGP), K51, 87–91 (DGTTT), G415, 481–483 (NAA), and D497 each bind ATP.

This sequence belongs to the chaperonin (HSP60) family. As to quaternary structure, forms a cylinder of 14 subunits composed of two heptameric rings stacked back-to-back. Interacts with the co-chaperonin GroES.

The protein localises to the cytoplasm. The catalysed reaction is ATP + H2O + a folded polypeptide = ADP + phosphate + an unfolded polypeptide.. Its function is as follows. Together with its co-chaperonin GroES, plays an essential role in assisting protein folding. The GroEL-GroES system forms a nano-cage that allows encapsulation of the non-native substrate proteins and provides a physical environment optimized to promote and accelerate protein folding. This Photobacterium profundum (strain SS9) protein is Chaperonin GroEL.